The following is a 118-amino-acid chain: Beta-2-microglobulin (118 aa).

A signal peptide spans 1-20 (MARFVALVLLGLLSLSGLDA). Residues 25–112 (PKIQVYSRHP…HVTLEQPRIV (88 aa)) form the Ig-like C1-type domain. Cysteines 45 and 99 form a disulfide.

The protein belongs to the beta-2-microglobulin family. Heterodimer of an alpha chain and a beta chain. Beta-2-microglobulin is the beta-chain of major histocompatibility complex class I molecules. Forms a heterotrimer with MR1 and a metabolite antigen.

The protein resides in the secreted. Component of the class I major histocompatibility complex (MHC). Involved in the presentation of peptide antigens to the immune system. The sequence is that of Beta-2-microglobulin (B2M) from Bos taurus (Bovine).